A 357-amino-acid chain; its full sequence is Sorbitol dehydrogenase (357 aa).

An N-acetylalanine modification is found at Ala2. Residue Cys45 coordinates Zn(2+). Residue Tyr51 participates in substrate binding. 2 residues coordinate Zn(2+): His70 and Glu71. Glu156 lines the substrate pocket. Positions 184, 204, and 209 each coordinate NAD(+). Phosphoserine occurs at positions 211 and 225. NAD(+) contacts are provided by residues 273-275 (VGL) and 297-299 (VFR). Substrate contacts are provided by Arg299 and Tyr300.

Belongs to the zinc-containing alcohol dehydrogenase family. In terms of assembly, homotetramer. It depends on Zn(2+) as a cofactor.

It localises to the mitochondrion membrane. The protein resides in the cell projection. The protein localises to the cilium. Its subcellular location is the flagellum. It catalyses the reaction xylitol + NAD(+) = D-xylulose + NADH + H(+). The enzyme catalyses L-iditol + NAD(+) = keto-L-sorbose + NADH + H(+). The catalysed reaction is keto-D-fructose + NADH + H(+) = D-sorbitol + NAD(+). Functionally, polyol dehydrogenase that catalyzes the reversible NAD(+)-dependent oxidation of various sugar alcohols. Is active with xylitol, L-iditol and D-sorbitol (D-glucitol) as substrates, leading to the C2-oxidized products D-xylulose, L-sorbose and D-fructose, respectively. Is a key enzyme in the polyol pathway that interconverts glucose and fructose via sorbitol, which constitutes an important alternate route for glucose metabolism. May play a role in sperm motility by using sorbitol as an alternative energy source for sperm motility. The polypeptide is Sorbitol dehydrogenase (SORD) (Macaca fascicularis (Crab-eating macaque)).